The following is a 129-amino-acid chain: Small ribosomal subunit protein uS8c (129 aa).

This sequence belongs to the universal ribosomal protein uS8 family. Part of the 30S ribosomal subunit.

Its subcellular location is the plastid. It localises to the chloroplast. One of the primary rRNA binding proteins, it binds directly to 16S rRNA central domain where it helps coordinate assembly of the platform of the 30S subunit. In Nephroselmis olivacea (Green alga), this protein is Small ribosomal subunit protein uS8c (rps8).